A 454-amino-acid polypeptide reads, in one-letter code: Bifunctional protein GlmU (454 aa).

Positions 1-226 (MALNVVILAA…AIEVEGANNR (226 aa)) are pyrophosphorylase. UDP-N-acetyl-alpha-D-glucosamine contacts are provided by residues 8-11 (LAAG), Lys-22, Gln-73, 78-79 (GT), 100-102 (YGD), Gly-137, Glu-151, Asn-166, and Asn-224. Asp-102 contacts Mg(2+). Asn-224 is a binding site for Mg(2+). The linker stretch occupies residues 227–247 (VQLAQLERAYQAREAEKLMLA). Residues 248 to 454 (GANLRDPHRI…DWKRPVKIKK (207 aa)) are N-acetyltransferase. Arg-330 and Lys-348 together coordinate UDP-N-acetyl-alpha-D-glucosamine. His-360 functions as the Proton acceptor in the catalytic mechanism. UDP-N-acetyl-alpha-D-glucosamine is bound by residues Tyr-363 and Asn-374. Residues Ala-377, 383-384 (NY), Ser-402, Ala-420, and Arg-437 contribute to the acetyl-CoA site.

The protein in the N-terminal section; belongs to the N-acetylglucosamine-1-phosphate uridyltransferase family. This sequence in the C-terminal section; belongs to the transferase hexapeptide repeat family. As to quaternary structure, homotrimer. Mg(2+) serves as cofactor.

The protein resides in the cytoplasm. The enzyme catalyses alpha-D-glucosamine 1-phosphate + acetyl-CoA = N-acetyl-alpha-D-glucosamine 1-phosphate + CoA + H(+). The catalysed reaction is N-acetyl-alpha-D-glucosamine 1-phosphate + UTP + H(+) = UDP-N-acetyl-alpha-D-glucosamine + diphosphate. The protein operates within nucleotide-sugar biosynthesis; UDP-N-acetyl-alpha-D-glucosamine biosynthesis; N-acetyl-alpha-D-glucosamine 1-phosphate from alpha-D-glucosamine 6-phosphate (route II): step 2/2. It participates in nucleotide-sugar biosynthesis; UDP-N-acetyl-alpha-D-glucosamine biosynthesis; UDP-N-acetyl-alpha-D-glucosamine from N-acetyl-alpha-D-glucosamine 1-phosphate: step 1/1. It functions in the pathway bacterial outer membrane biogenesis; LPS lipid A biosynthesis. In terms of biological role, catalyzes the last two sequential reactions in the de novo biosynthetic pathway for UDP-N-acetylglucosamine (UDP-GlcNAc). The C-terminal domain catalyzes the transfer of acetyl group from acetyl coenzyme A to glucosamine-1-phosphate (GlcN-1-P) to produce N-acetylglucosamine-1-phosphate (GlcNAc-1-P), which is converted into UDP-GlcNAc by the transfer of uridine 5-monophosphate (from uridine 5-triphosphate), a reaction catalyzed by the N-terminal domain. The chain is Bifunctional protein GlmU from Shewanella putrefaciens (strain CN-32 / ATCC BAA-453).